The following is a 513-amino-acid chain: Nitrate transporter 2.2 (513 aa).

The next 12 membrane-spanning stretches (helical) occupy residues 38 to 58 (WICF…APVI), 74 to 94 (VSAV…VDVV), 98 to 118 (YGAA…ALVT), 128 to 148 (FFIG…GTMF), 158 to 178 (AIAA…MPLI), 196 to 216 (AFFV…LLGI), 247 to 265 (LGNY…SFGV), 281 to 301 (FGLN…MNIF), 323 to 343 (LWVL…MGKV), 351 to 371 (IVIM…HFGI), 383 to 403 (VSGL…AIWF), and 419 to 439 (FVWM…IWFP).

The protein belongs to the major facilitator superfamily. Nitrate/nitrite porter (TC 2.A.1.8) family.

Its subcellular location is the cell membrane. Functionally, involved in nitrate transport, but does not seem to be able to mediate transport by its own. Acts as a dual component transporter with NAR2 (system 2). Involved in a high affinity transport specific for nitrate. The sequence is that of Nitrate transporter 2.2 from Chlamydomonas reinhardtii (Chlamydomonas smithii).